The chain runs to 164 residues: UPF0304 protein YfbU (164 aa).

It belongs to the UPF0304 family.

The protein is UPF0304 protein YfbU of Salmonella choleraesuis (strain SC-B67).